A 331-amino-acid polypeptide reads, in one-letter code: Probable leucine carboxyl methyltransferase 1 (331 aa).

S-adenosyl-L-methionine contacts are provided by residues Arg82, Gly107, Asp131, 179–180 (DL), and Glu206.

The protein belongs to the methyltransferase superfamily. LCMT family.

It catalyses the reaction [phosphatase 2A protein]-C-terminal L-leucine + S-adenosyl-L-methionine = [phosphatase 2A protein]-C-terminal L-leucine methyl ester + S-adenosyl-L-homocysteine. Functionally, methylates the carboxyl group of the C-terminal leucine residue of protein phosphatase 2A catalytic subunits to form alpha-leucine ester residues. The protein is Probable leucine carboxyl methyltransferase 1 of Caenorhabditis briggsae.